We begin with the raw amino-acid sequence, 328 residues long: tRNA dimethylallyltransferase (328 aa).

25 to 32 (GPTAVGKT) is an ATP binding site. 27 to 32 (TAVGKT) serves as a coordination point for substrate. Residues 50–53 (DSMQ) are interaction with substrate tRNA.

This sequence belongs to the IPP transferase family. Monomer. Requires Mg(2+) as cofactor.

It catalyses the reaction adenosine(37) in tRNA + dimethylallyl diphosphate = N(6)-dimethylallyladenosine(37) in tRNA + diphosphate. In terms of biological role, catalyzes the transfer of a dimethylallyl group onto the adenine at position 37 in tRNAs that read codons beginning with uridine, leading to the formation of N6-(dimethylallyl)adenosine (i(6)A). The protein is tRNA dimethylallyltransferase of Halothermothrix orenii (strain H 168 / OCM 544 / DSM 9562).